A 146-amino-acid chain; its full sequence is Transcriptional regulator MraZ (146 aa).

2 SpoVT-AbrB domains span residues 6–49 (TYDH…TEEE) and 78–121 (THEV…DQKS).

This sequence belongs to the MraZ family. In terms of assembly, forms oligomers.

The protein localises to the cytoplasm. It is found in the nucleoid. The polypeptide is Transcriptional regulator MraZ (Mesoplasma florum (strain ATCC 33453 / NBRC 100688 / NCTC 11704 / L1) (Acholeplasma florum)).